Consider the following 324-residue polypeptide: Chlorophyllase-1 (324 aa).

Residues 136 to 140 (GHSRG) carry the GXSXG motif. Residue serine 138 is the Nucleophile of the active site. Residues aspartate 168 and histidine 243 each act as charge relay system in the active site.

This sequence belongs to the AB hydrolase superfamily. Lipase family. In terms of tissue distribution, expressed in seedlings, leaves, flowers and siliques, but not in roots.

The protein localises to the cytoplasm. It is found in the cytosol. It carries out the reaction a chlorophyll + H2O = a chlorophyllide + phytol + H(+). The catalysed reaction is chlorophyll a + H2O = phytol + chlorophyllide a + H(+). It functions in the pathway porphyrin-containing compound metabolism; chlorophyll degradation. Functionally, catalyzes the hydrolysis of ester bond in chlorophyll to yield chlorophyllide and phytol. Shows a preferential activity toward chlorophyll a. Does not seem to be required for chlorophyll degradation during senescence. May modulate the balance between different plant defense pathways. In Arabidopsis thaliana (Mouse-ear cress), this protein is Chlorophyllase-1.